Consider the following 1653-residue polypeptide: Protein strawberry notch (1653 aa).

Disordered stretches follow at residues 1-46 (MTSK…GRDL), 190-211 (GSPA…GGAI), 237-265 (GSNA…PNPG), 317-345 (NNQK…VKGN), and 883-1043 (SVAD…PSGS). Acidic residues predominate over residues 11 to 36 (DADDDNDNFDEDDSGSDFDDDEDPDQ). Phosphoserine is present on residues Ser-24 and Ser-26. A compositionally biased stretch (polar residues) spans 194–205 (ARSSGNAGTTGS). Positions 256–265 (SPTGGIPNPG) are enriched in low complexity. Gly residues predominate over residues 329 to 342 (GSGGPAGGAPGSGV). Low complexity predominate over residues 883–901 (SVADSTSSLSNNSNITTAA). 2 positions are modified to phosphoserine: Ser-929 and Ser-931. Acidic residues predominate over residues 966–975 (IDDEDEDHDV). The span at 980–998 (RSVASDASSDFNPFFSGSD) shows a compositional bias: polar residues. Basic residues predominate over residues 1008–1027 (RSKKSKKAQKKSKKKVKKEK). A coiled-coil region spans residues 1064 to 1125 (LSTQDKIQDL…RKIERLGARL (62 aa)).

The protein belongs to the SBNO family. Interacts with vg for function in the wing disk. Interacts with Su(H) for function in the eye disk. At stage 8, when the formation of the midline precursor cells depends on Notch signaling, high level of expression is seen in the midline precursor cells and a lower level in the surrounding epidermal cells. Between stages 11 and 14, expression is uniform throughout the epidermis, and at stage 16, high level of expression is restricted to the central nervous system. Expressed in the larval leg, wing and eye imaginal disks. Expression is over the wing disk and accumulates within the pleural region.

The protein resides in the nucleus. In terms of biological role, notch pathway component, may contribute to the specificity between lateral and inductive Notch signaling pathways in the wing disk. Required during many developmental stages including oogenesis, embryogenesis and imaginal development of the eye, wing and leg. Ebi and sno regulate EGFR-dependent Delta transcription in the developing eye, by antagonizing a repressor function of Suppressor of Hairless (Su(H)). They are required in the R-cells for normal cone cell development. The protein is Protein strawberry notch of Drosophila melanogaster (Fruit fly).